The chain runs to 353 residues: Probable tRNA pseudouridine synthase B (353 aa).

Residue Asp45 is the Nucleophile of the active site. Residues 211 to 287 (YPKIVAKKSA…DHIFVEAKHG (77 aa)) form the PUA domain. Residues 292 to 353 (VRDREKDVQR…TGVHRRPGSH (62 aa)) are disordered. A compositionally biased stretch (basic and acidic residues) spans 309-328 (NIRDAAHGPDSRTGRGRKET). A compositionally biased stretch (basic residues) spans 336 to 353 (RVRKLQNKTGVHRRPGSH).

This sequence belongs to the pseudouridine synthase TruB family. Type 2 subfamily.

The enzyme catalyses uridine(55) in tRNA = pseudouridine(55) in tRNA. Its function is as follows. Could be responsible for synthesis of pseudouridine from uracil-55 in the psi GC loop of transfer RNAs. In Thermoplasma volcanium (strain ATCC 51530 / DSM 4299 / JCM 9571 / NBRC 15438 / GSS1), this protein is Probable tRNA pseudouridine synthase B.